The sequence spans 62 residues: Large ribosomal subunit protein eL37 (62 aa).

Cys-20, Cys-23, Cys-35, and Cys-38 together coordinate Zn(2+). The C4-type zinc finger occupies 20-38 (CRRCGRHSFNVAKGYCAAC).

Belongs to the eukaryotic ribosomal protein eL37 family. Zn(2+) serves as cofactor.

In terms of biological role, binds to the 23S rRNA. This Desulfurococcus amylolyticus (strain DSM 18924 / JCM 16383 / VKM B-2413 / 1221n) (Desulfurococcus kamchatkensis) protein is Large ribosomal subunit protein eL37.